Consider the following 602-residue polypeptide: Elongation factor 4 (602 aa).

The tr-type G domain maps to 7 to 189 (SRIRNFCIIA…AVVDRVPAPA (183 aa)). Residues 19-24 (DHGKST) and 136-139 (NKID) each bind GTP.

The protein belongs to the TRAFAC class translation factor GTPase superfamily. Classic translation factor GTPase family. LepA subfamily.

Its subcellular location is the cell inner membrane. It carries out the reaction GTP + H2O = GDP + phosphate + H(+). Required for accurate and efficient protein synthesis under certain stress conditions. May act as a fidelity factor of the translation reaction, by catalyzing a one-codon backward translocation of tRNAs on improperly translocated ribosomes. Back-translocation proceeds from a post-translocation (POST) complex to a pre-translocation (PRE) complex, thus giving elongation factor G a second chance to translocate the tRNAs correctly. Binds to ribosomes in a GTP-dependent manner. This Synechococcus sp. (strain CC9902) protein is Elongation factor 4.